Consider the following 428-residue polypeptide: L-rhamnose isomerase (428 aa).

Mn(2+)-binding residues include His-260, Asp-292, and Asp-294.

This sequence belongs to the rhamnose isomerase family. Mn(2+) is required as a cofactor.

It is found in the cytoplasm. The enzyme catalyses L-rhamnopyranose = L-rhamnulose. It participates in carbohydrate degradation; L-rhamnose degradation; glycerone phosphate from L-rhamnose: step 1/3. Catalyzes the interconversion of L-rhamnose and L-rhamnulose. This chain is L-rhamnose isomerase, found in Enterococcus faecalis (strain ATCC 700802 / V583).